The sequence spans 444 residues: NADH-quinone oxidoreductase subunit F (444 aa).

61–70 (GRGGAGFSTG) is a binding site for NAD(+). FMN is bound at residue 176 to 223 (GAGRYICGEETALINSLEGRRANPRSKPPFPAVFGLWGKPTCVNNVET). Residues cysteine 353, cysteine 356, cysteine 359, and cysteine 400 each coordinate [4Fe-4S] cluster.

This sequence belongs to the complex I 51 kDa subunit family. As to quaternary structure, composed of 13 different subunits. Subunits NuoCD, E, F, and G constitute the peripheral sector of the complex. It depends on FMN as a cofactor. The cofactor is [4Fe-4S] cluster.

It catalyses the reaction a quinone + NADH + 5 H(+)(in) = a quinol + NAD(+) + 4 H(+)(out). NDH-1 shuttles electrons from NADH, via FMN and iron-sulfur (Fe-S) centers, to quinones in the respiratory chain. Couples the redox reaction to proton translocation (for every two electrons transferred, four hydrogen ions are translocated across the cytoplasmic membrane), and thus conserves the redox energy in a proton gradient. The sequence is that of NADH-quinone oxidoreductase subunit F (nuoF) from Buchnera aphidicola subsp. Acyrthosiphon pisum (strain APS) (Acyrthosiphon pisum symbiotic bacterium).